Consider the following 73-residue polypeptide: Large ribosomal subunit protein bL27c (73 aa).

This sequence belongs to the bacterial ribosomal protein bL27 family.

It is found in the plastid. The protein resides in the chloroplast. The sequence is that of Large ribosomal subunit protein bL27c (rpl27) from Chrysochromulina alifera (Plankton alga).